Consider the following 511-residue polypeptide: Glucans biosynthesis protein G (511 aa).

An N-terminal signal peptide occupies residues 1–22 (MMKMRWLSAAVMLTLYTSSSWA).

This sequence belongs to the OpgD/OpgG family.

The protein localises to the periplasm. It participates in glycan metabolism; osmoregulated periplasmic glucan (OPG) biosynthesis. Involved in the biosynthesis of osmoregulated periplasmic glucans (OPGs). In Escherichia coli O81 (strain ED1a), this protein is Glucans biosynthesis protein G.